A 238-amino-acid polypeptide reads, in one-letter code: Ribonuclease PH (238 aa).

Phosphate contacts are provided by residues Arg-86 and 124–126 (GTR).

The protein belongs to the RNase PH family. As to quaternary structure, homohexameric ring arranged as a trimer of dimers.

The enzyme catalyses tRNA(n+1) + phosphate = tRNA(n) + a ribonucleoside 5'-diphosphate. Its function is as follows. Phosphorolytic 3'-5' exoribonuclease that plays an important role in tRNA 3'-end maturation. Removes nucleotide residues following the 3'-CCA terminus of tRNAs; can also add nucleotides to the ends of RNA molecules by using nucleoside diphosphates as substrates, but this may not be physiologically important. Probably plays a role in initiation of 16S rRNA degradation (leading to ribosome degradation) during starvation. This is Ribonuclease PH from Pectobacterium atrosepticum (strain SCRI 1043 / ATCC BAA-672) (Erwinia carotovora subsp. atroseptica).